The primary structure comprises 610 residues: UvrABC system protein C (610 aa).

In terms of domain architecture, GIY-YIG spans 16–94; it reads SQPGVYSMYD…IKLYQPRYNV (79 aa). In terms of domain architecture, UVR spans 204–239; the sequence is QQVLNQLVERMELASRALNFEDAAHARDQIQAVRRV.

It belongs to the UvrC family. In terms of assembly, interacts with UvrB in an incision complex.

Its subcellular location is the cytoplasm. Its function is as follows. The UvrABC repair system catalyzes the recognition and processing of DNA lesions. UvrC both incises the 5' and 3' sides of the lesion. The N-terminal half is responsible for the 3' incision and the C-terminal half is responsible for the 5' incision. The polypeptide is UvrABC system protein C (Sodalis glossinidius (strain morsitans)).